A 239-amino-acid chain; its full sequence is Ribosomal RNA small subunit methyltransferase G (239 aa).

Residues G79, F84, A130 to E131, and R149 each bind S-adenosyl-L-methionine. Residues K218–P227 are compositionally biased toward basic residues. Residues K218–A239 form a disordered region.

It belongs to the methyltransferase superfamily. RNA methyltransferase RsmG family.

The protein localises to the cytoplasm. Functionally, specifically methylates the N7 position of a guanine in 16S rRNA. This Leuconostoc citreum (strain KM20) protein is Ribosomal RNA small subunit methyltransferase G.